Consider the following 173-residue polypeptide: CASP-like protein 3A1 (173 aa).

Position 1 (Met-1) is a topological domain, cytoplasmic. A helical transmembrane segment spans residues 2 to 22 (VDIALRSAVVAFMVVSLSAMF). Residues 23-48 (TSTQHSEVHIIGFSIPVSLRWNRSQP) are Extracellular-facing. Asn-44 is a glycosylation site (N-linked (GlcNAc...) asparagine). The helical transmembrane segment at 49 to 69 (FEFLVVVELLICAYAFVQFVY) threads the bilayer. Residues 70-84 (QSVVLAKNAVPTRRC) are Cytoplasmic-facing. A helical membrane pass occupies residues 85–105 (IWVQLAADQVCAYLVLAAAAA). The Extracellular segment spans residues 106–140 (AAGASRTNKSGFQSLGMQNIKVPGVCIVLDKFCNR). Asn-113 is a glycosylation site (N-linked (GlcNAc...) asparagine). A helical transmembrane segment spans residues 141–161 (ATIAIIFTLLAAGASGISVTL). Over 162-173 (DVYMLTLTYYMG) the chain is Cytoplasmic.

Belongs to the Casparian strip membrane proteins (CASP) family. In terms of assembly, homodimer and heterodimers.

Its subcellular location is the cell membrane. In Pteridium aquilinum subsp. aquilinum (Bracken fern), this protein is CASP-like protein 3A1.